A 74-amino-acid polypeptide reads, in one-letter code: Exodeoxyribonuclease 7 small subunit (74 aa).

It belongs to the XseB family. Heterooligomer composed of large and small subunits.

The protein localises to the cytoplasm. The catalysed reaction is Exonucleolytic cleavage in either 5'- to 3'- or 3'- to 5'-direction to yield nucleoside 5'-phosphates.. Functionally, bidirectionally degrades single-stranded DNA into large acid-insoluble oligonucleotides, which are then degraded further into small acid-soluble oligonucleotides. The chain is Exodeoxyribonuclease 7 small subunit from Symbiobacterium thermophilum (strain DSM 24528 / JCM 14929 / IAM 14863 / T).